We begin with the raw amino-acid sequence, 525 residues long: Light-independent protochlorophyllide reductase subunit B (525 aa).

Asp36 is a binding site for [4Fe-4S] cluster. The active-site Proton donor is the Asp286. Substrate is bound at residue 421 to 422; that stretch reads GL.

The protein belongs to the ChlB/BchB/BchZ family. Protochlorophyllide reductase is composed of three subunits; ChlL, ChlN and ChlB. Forms a heterotetramer of two ChlB and two ChlN subunits. The cofactor is [4Fe-4S] cluster.

It carries out the reaction chlorophyllide a + oxidized 2[4Fe-4S]-[ferredoxin] + 2 ADP + 2 phosphate = protochlorophyllide a + reduced 2[4Fe-4S]-[ferredoxin] + 2 ATP + 2 H2O. Its pathway is porphyrin-containing compound metabolism; chlorophyll biosynthesis (light-independent). Its function is as follows. Component of the dark-operative protochlorophyllide reductase (DPOR) that uses Mg-ATP and reduced ferredoxin to reduce ring D of protochlorophyllide (Pchlide) to form chlorophyllide a (Chlide). This reaction is light-independent. The NB-protein (ChlN-ChlB) is the catalytic component of the complex. The polypeptide is Light-independent protochlorophyllide reductase subunit B (Prochlorococcus marinus (strain NATL1A)).